Here is a 207-residue protein sequence, read N- to C-terminus: Pyridoxal 5'-phosphate synthase subunit PdxT (207 aa).

An L-glutamine-binding site is contributed by 53-55 (GES). Catalysis depends on C85, which acts as the Nucleophile. L-glutamine is bound by residues R114 and 143 to 144 (IR). Residues H184 and E186 each act as charge relay system in the active site.

Belongs to the glutaminase PdxT/SNO family. In terms of assembly, in the presence of PdxS, forms a dodecamer of heterodimers. Only shows activity in the heterodimer.

The enzyme catalyses aldehydo-D-ribose 5-phosphate + D-glyceraldehyde 3-phosphate + L-glutamine = pyridoxal 5'-phosphate + L-glutamate + phosphate + 3 H2O + H(+). The catalysed reaction is L-glutamine + H2O = L-glutamate + NH4(+). Its pathway is cofactor biosynthesis; pyridoxal 5'-phosphate biosynthesis. In terms of biological role, catalyzes the hydrolysis of glutamine to glutamate and ammonia as part of the biosynthesis of pyridoxal 5'-phosphate. The resulting ammonia molecule is channeled to the active site of PdxS. The polypeptide is Pyridoxal 5'-phosphate synthase subunit PdxT (Acidothermus cellulolyticus (strain ATCC 43068 / DSM 8971 / 11B)).